A 622-amino-acid chain; its full sequence is Apical membrane antigen 1 (622 aa).

Residues 1 to 24 form the signal peptide; that stretch reads MRKLYCVLLLSAFEFTYMINFGRG. At 25–546 the chain is on the extracellular side; sequence QNYWEHPYQK…EHKPTYDKMK (522 aa). Intrachain disulfides connect Cys-149–Cys-302, Cys-217–Cys-247, Cys-263–Cys-275, Cys-320–Cys-418, and Cys-337–Cys-409. An N-linked (GlcNAc...) asparagine glycan is attached at Asn-162. Asn-286, Asn-371, Asn-421, Asn-422, and Asn-499 each carry an N-linked (GlcNAc...) asparagine glycan. 3 cysteine pairs are disulfide-bonded: Cys-443/Cys-502, Cys-490/Cys-507, and Cys-492/Cys-509. Residues 547 to 567 form a helical membrane-spanning segment; it reads IIIASSAAVAVLATILMVYLY. Over 568–622 the chain is Cytoplasmic; it reads KRKGNAEKYDKMDEPQHYGKSNSRNDEMLDPEASFWGEEKRASHTTPVLMEKPYY. Residues 578–594 are compositionally biased toward basic and acidic residues; the sequence is KMDEPQHYGKSNSRNDE. Positions 578 to 607 are disordered; it reads KMDEPQHYGKSNSRNDEMLDPEASFWGEEK.

Belongs to the apicomplexan parasites AMA1 family.

It localises to the membrane. Functionally, involved in parasite invasion of erythrocytes. The polypeptide is Apical membrane antigen 1 (AMA-1) (Plasmodium falciparum (isolate FC27 / Papua New Guinea)).